The following is a 245-amino-acid chain: Tetraspanin-6 (245 aa).

The Cytoplasmic segment spans residues 1–19; sequence MASPSRRLQTKPVITCFKS. Residues 20–40 traverse the membrane as a helical segment; the sequence is VLLIYTFIFWITGVILLAVGI. The Extracellular portion of the chain corresponds to 41–59; that stretch reads WGKVSLENYFSLLNEKATN. A helical membrane pass occupies residues 60 to 80; sequence VPFVLIATGTVIILLGTFGCF. Residues 81-93 are Cytoplasmic-facing; the sequence is ATCRASAWMLKLY. The helical transmembrane segment at 94-114 threads the bilayer; the sequence is AMFLTLVFLVELVAAIVGFVF. The Extracellular portion of the chain corresponds to 115–208; it reads RHEIKNSFKN…IKVMTIIESE (94 aa). Residue Asn134 is glycosylated (N-linked (GlcNAc...) asparagine). Residues 209–229 form a helical membrane-spanning segment; that stretch reads MGVVAGISFGVACFQLIGIFL. Residues 230–245 are Cytoplasmic-facing; it reads AYCLSRAITNNQYEIV.

It belongs to the tetraspanin (TM4SF) family.

The protein resides in the membrane. The polypeptide is Tetraspanin-6 (TSPAN6) (Homo sapiens (Human)).